We begin with the raw amino-acid sequence, 210 residues long: 23.5 kDa heat shock protein, mitochondrial (210 aa).

The N-terminal 20 residues, M1–V20, are a transit peptide targeting the mitochondrion. The sHSP domain maps to M102–D210.

Belongs to the small heat shock protein (HSP20) family. In terms of assembly, may form oligomeric structures.

The protein resides in the mitochondrion. This is 23.5 kDa heat shock protein, mitochondrial (HSP23.5) from Arabidopsis thaliana (Mouse-ear cress).